Here is a 368-residue protein sequence, read N- to C-terminus: Probable dual-specificity RNA methyltransferase RlmN (368 aa).

Catalysis depends on E108, which acts as the Proton acceptor. One can recognise a Radical SAM core domain in the interval H114–D345. Cysteines 121 and 350 form a disulfide. Residues C128, C132, and C135 each contribute to the [4Fe-4S] cluster site. S-adenosyl-L-methionine-binding positions include G175–E176, S207, S230–H232, and N307. C350 acts as the S-methylcysteine intermediate in catalysis.

It belongs to the radical SAM superfamily. RlmN family. [4Fe-4S] cluster is required as a cofactor.

The protein localises to the cytoplasm. The catalysed reaction is adenosine(2503) in 23S rRNA + 2 reduced [2Fe-2S]-[ferredoxin] + 2 S-adenosyl-L-methionine = 2-methyladenosine(2503) in 23S rRNA + 5'-deoxyadenosine + L-methionine + 2 oxidized [2Fe-2S]-[ferredoxin] + S-adenosyl-L-homocysteine. It catalyses the reaction adenosine(37) in tRNA + 2 reduced [2Fe-2S]-[ferredoxin] + 2 S-adenosyl-L-methionine = 2-methyladenosine(37) in tRNA + 5'-deoxyadenosine + L-methionine + 2 oxidized [2Fe-2S]-[ferredoxin] + S-adenosyl-L-homocysteine. Specifically methylates position 2 of adenine 2503 in 23S rRNA and position 2 of adenine 37 in tRNAs. This is Probable dual-specificity RNA methyltransferase RlmN from Pelotomaculum thermopropionicum (strain DSM 13744 / JCM 10971 / SI).